Reading from the N-terminus, the 158-residue chain is UPF0329 protein ECU06_0050 (158 aa).

The protein belongs to the UPF0329 family.

This is UPF0329 protein ECU06_0050 from Encephalitozoon cuniculi (strain GB-M1) (Microsporidian parasite).